The primary structure comprises 382 residues: uncharacterized protein (382 aa).

12 consecutive transmembrane segments (helical) span residues 14 to 34 (GLLL…LWLA), 45 to 65 (VVSS…GYVI), 79 to 99 (FIFA…SWLA), 102 to 122 (FVAG…LMCS), 131 to 151 (LLAA…LLVS), 157 to 177 (LMSV…PLLF), 204 to 224 (LGVN…GLMP), 235 to 255 (ASIG…QWPI), 270 to 290 (VQVF…AMAP), 291 to 311 (ALFI…AWAC), 325 to 345 (ALLL…AMLM), and 348 to 368 (FSDN…LLML).

Belongs to the major facilitator superfamily. YcaD (TC 2.A.1.26) family.

The protein resides in the cell inner membrane. This is an uncharacterized protein from Escherichia coli O7:K1 (strain IAI39 / ExPEC).